We begin with the raw amino-acid sequence, 494 residues long: 5'-3' exonuclease PLD3 (494 aa).

Over 1 to 37 the chain is Cytoplasmic; sequence MNPKVEYKQIQSHDEAENQVLQHECHQAKARKYYRCA. Residues 38–58 form a helical; Signal-anchor for type II membrane protein membrane-spanning segment; it reads VVIAIIITLLFCVLASQLLLF. The Lumenal segment spans residues 59 to 494; sequence PLFSITSQTT…LSSWKEKCIF (436 aa). The N-linked (GlcNAc...) asparagine glycan is linked to N100. Residues 198-225 form the PLD phosphodiesterase 1 domain; that stretch reads TDGVLHTKFWVVDSEHFYIGSANMDWRS. Residues H203, K205, and D210 contribute to the active site. N238, N260, N270, N286, and N389 each carry an N-linked (GlcNAc...) asparagine glycan. Residues 413 to 439 form the PLD phosphodiesterase 2 domain; the sequence is YARVNHNKYMVTDRVAYIGTSNWSGDY. Residues H418, K420, and D425 contribute to the active site. N434, N451, and N477 each carry an N-linked (GlcNAc...) asparagine glycan.

This sequence belongs to the phospholipase D family. In terms of processing, N-glycosylated. Proteolytically processed to a soluble form that is stable within endosomes and lysosomes. During transport through the secretory pathway becomes proteolysed by cysteine proteases, thereby releasing a stable soluble lysosomal lumenal polypeptide, whereas the transmembrane-bound fragment is rapidly degraded. Its transport route to lysosomes involves ubiquitination and the ESCRT complex. Post-translationally, ubiquitinated. Ubiquitination mediates sorting into lysosomes.

The protein localises to the endoplasmic reticulum membrane. Its subcellular location is the lysosome lumen. The protein resides in the early endosome membrane. It is found in the late endosome membrane. It localises to the golgi apparatus membrane. The protein localises to the endosome membrane. The enzyme catalyses Exonucleolytic cleavage in the 5'- to 3'-direction to yield nucleoside 3'-phosphates.. Its function is as follows. 5'-&gt;3' DNA exonuclease which digests single-stranded DNA (ssDNA). Regulates inflammatory cytokine responses via the degradation of nucleic acids, by reducing the concentration of ssDNA able to stimulate TLR9, a nucleotide-sensing receptor in collaboration with PLD4. May be important in myotube formation. Plays a role in lysosomal homeostasis. Involved in the regulation of endosomal protein sorting. This is 5'-3' exonuclease PLD3 (pld3) from Xenopus tropicalis (Western clawed frog).